The sequence spans 290 residues: 33 kDa chaperonin (290 aa).

2 disulfide bridges follow: C235–C237 and C268–C271.

Belongs to the HSP33 family. Post-translationally, under oxidizing conditions two disulfide bonds are formed involving the reactive cysteines. Under reducing conditions zinc is bound to the reactive cysteines and the protein is inactive.

Its subcellular location is the cytoplasm. Redox regulated molecular chaperone. Protects both thermally unfolding and oxidatively damaged proteins from irreversible aggregation. Plays an important role in the bacterial defense system toward oxidative stress. The protein is 33 kDa chaperonin of Streptococcus pyogenes serotype M1.